We begin with the raw amino-acid sequence, 287 residues long: L-ascorbate peroxidase 3 (287 aa).

A2 carries the post-translational modification N-acetylalanine. H40 serves as the catalytic Proton acceptor. The tract at residues 46 to 66 (DAQSKTGGPNGSIRNEEEHTH) is disordered. A heme b-binding site is contributed by H160. T161, T177, and D184 together coordinate K(+). Residues 259–279 (ILAQSAFGVAVAAAVVAFGYF) traverse the membrane as a helical segment. The short motif at 281 to 287 (EIRKRMK) is the AKR2A-binding sequence (ABS) required for peroxisome membrane targeting element.

Belongs to the peroxidase family. Ascorbate peroxidase subfamily. As to quaternary structure, interacts via its C-terminal region with AKR2A and AKR2B. The cofactor is heme b.

The protein resides in the peroxisome membrane. The protein localises to the glyoxysome membrane. The enzyme catalyses L-ascorbate + H2O2 = L-dehydroascorbate + 2 H2O. Its function is as follows. Plays a key role in hydrogen peroxide removal. The polypeptide is L-ascorbate peroxidase 3 (APX3) (Arabidopsis thaliana (Mouse-ear cress)).